The sequence spans 801 residues: LPS-assembly protein LptD (801 aa).

An N-terminal signal peptide occupies residues 1-23 (MARLFSLKPLVLALGFCFGTHCA).

Belongs to the LptD family. Component of the lipopolysaccharide transport and assembly complex. Interacts with LptE and LptA.

It is found in the cell outer membrane. Functionally, together with LptE, is involved in the assembly of lipopolysaccharide (LPS) at the surface of the outer membrane. The sequence is that of LPS-assembly protein LptD from Neisseria gonorrhoeae (strain ATCC 700825 / FA 1090).